The sequence spans 85 residues: Toxin Cll5c* (85 aa).

The signal sequence occupies residues 1-17; sequence MNSLLIITACLVLFVWA. In terms of domain architecture, LCN-type CS-alpha/beta spans 18-83; it reads KEGYLVNKST…TYPLPNKSCS (66 aa). Cystine bridges form between Cys-29–Cys-82, Cys-33–Cys-58, Cys-42–Cys-63, and Cys-46–Cys-65. A propeptide spans 84–85 (removed by a carboxypeptidase); it reads KK.

The protein belongs to the long (4 C-C) scorpion toxin superfamily. Sodium channel inhibitor family. Beta subfamily. Expressed by the venom gland.

It localises to the secreted. In terms of biological role, beta toxins bind voltage-independently at site-4 of sodium channels (Nav) and shift the voltage of activation toward more negative potentials thereby affecting sodium channel activation and promoting spontaneous and repetitive firing. The chain is Toxin Cll5c* from Centruroides limpidus (Mexican scorpion).